We begin with the raw amino-acid sequence, 315 residues long: Aspartate carbamoyltransferase catalytic subunit (315 aa).

Carbamoyl phosphate contacts are provided by arginine 64 and threonine 65. Lysine 92 provides a ligand contact to L-aspartate. Residues arginine 114, histidine 142, and glutamine 145 each coordinate carbamoyl phosphate. L-aspartate is bound by residues arginine 175 and arginine 229. Positions 270 and 271 each coordinate carbamoyl phosphate.

Belongs to the aspartate/ornithine carbamoyltransferase superfamily. ATCase family. In terms of assembly, heterododecamer (2C3:3R2) of six catalytic PyrB chains organized as two trimers (C3), and six regulatory PyrI chains organized as three dimers (R2).

It catalyses the reaction carbamoyl phosphate + L-aspartate = N-carbamoyl-L-aspartate + phosphate + H(+). It functions in the pathway pyrimidine metabolism; UMP biosynthesis via de novo pathway; (S)-dihydroorotate from bicarbonate: step 2/3. Its function is as follows. Catalyzes the condensation of carbamoyl phosphate and aspartate to form carbamoyl aspartate and inorganic phosphate, the committed step in the de novo pyrimidine nucleotide biosynthesis pathway. This chain is Aspartate carbamoyltransferase catalytic subunit, found in Bradyrhizobium diazoefficiens (strain JCM 10833 / BCRC 13528 / IAM 13628 / NBRC 14792 / USDA 110).